Consider the following 106-residue polypeptide: uncharacterized protein (106 aa).

The tract at residues 38-106 (KGNKKSKAAT…STHLPYHGSY (69 aa)) is disordered. Basic and acidic residues-rich tracts occupy residues 57 to 71 (TRQERDLTDRKHRPE) and 82 to 96 (WKKEVTTRSRPKETS).

The protein localises to the mitochondrion. This is an uncharacterized protein from Arabidopsis thaliana (Mouse-ear cress).